The following is a 174-amino-acid chain: Calcineurin subunit B (174 aa).

EF-hand domains follow at residues 21 to 56 (EEIE…ASNP), 60 to 88 (RLFS…FSVH), 90 to 125 (NKEE…MVGT), and 131 to 166 (QLQQ…SNVT). Ca(2+) contacts are provided by Asp34, Asn36, Ser38, Ser40, Glu45, Asp66, Asp68, Asp72, Glu77, Asp103, Asp105, Asp107, Tyr109, Glu114, Asp144, Asp146, Asp148, Lys150, and Glu155.

This sequence belongs to the calcineurin regulatory subunit family. In terms of assembly, composed of a catalytic subunit (A) and a regulatory subunit (B).

Its function is as follows. Regulatory subunit of calcineurin, a calcium-dependent, calmodulin stimulated protein phosphatase. Confers calcium sensitivity. The polypeptide is Calcineurin subunit B (cnb1) (Schizosaccharomyces pombe (strain 972 / ATCC 24843) (Fission yeast)).